The following is a 172-amino-acid chain: MVTLASHLDACPDAAIWGSSKTENLGVEKIIVNVISNSNIRYVLVCGTESRGHLAGHSLLAIHANGIDEQGRITGSQGAIPFIENISGTAVERFQQQVTVLNRIGLNDPEEIRRIVEDYRDKGEAYPEEPMLVCAPKKRQTSFAVPTSGDVIISGEFVMDSKAGIIYTAESL.

Belongs to the MtrA family. In terms of assembly, may be part of a complex composed of 3 subunits; MtxA, MtxH and MtxX.

The polypeptide is Putative methyltransferase Mtx subunit A (mtxA) (Methanosarcina mazei (strain ATCC BAA-159 / DSM 3647 / Goe1 / Go1 / JCM 11833 / OCM 88) (Methanosarcina frisia)).